A 66-amino-acid polypeptide reads, in one-letter code: uncharacterized protein (66 aa).

This is an uncharacterized protein from Escherichia coli O157:H7.